Here is a 926-residue protein sequence, read N- to C-terminus: Tyrosine-protein phosphatase non-receptor type 4 (926 aa).

One can recognise an FERM domain in the interval 29 to 312 (VVCNILLLDN…EHHTFFRLDR (284 aa)). Disordered regions lie at residues 379–412 (SDDR…TRVR), 429–474 (SEDF…KKNS), and 492–511 (NESF…GGIP). 2 stretches are compositionally biased toward polar residues: residues 398-408 (NHRNSSFTQEA) and 432-455 (FVSQ…PSQE). The residue at position 474 (S474) is a Phosphoserine. In terms of domain architecture, PDZ spans 517–589 (LIKMKPDENG…DQVVLFIKAS (73 aa)). Residues 655–911 (VLAQFDQLYR…RFVCEAILKV (257 aa)) enclose the Tyrosine-protein phosphatase domain. Residues D820, 852–858 (CSAGIGR), and Q896 contribute to the substrate site. Residue C852 is the Phosphocysteine intermediate of the active site.

It belongs to the protein-tyrosine phosphatase family. Non-receptor class subfamily. As to expression, highly expressed in testis. Specifically expressed in spermatocytes and spermatids within seminiferous tubules (at protein level).

It localises to the cell membrane. It is found in the cytoplasm. Its subcellular location is the cytoskeleton. It carries out the reaction O-phospho-L-tyrosyl-[protein] + H2O = L-tyrosyl-[protein] + phosphate. Phosphatase that plays a role in immunity, learning, synaptic plasticity or cell homeostasis. Regulates neuronal cell homeostasis by protecting neurons against apoptosis. Negatively regulates TLR4-induced interferon beta production by dephosphorylating adapter TICAM2 and inhibiting subsequent TRAM-TRIF interaction. Dephosphorylates also the immunoreceptor tyrosine-based activation motifs/ITAMs of the TCR zeta subunit and thereby negatively regulates TCR-mediated signaling pathway. May act at junctions between the membrane and the cytoskeleton. The chain is Tyrosine-protein phosphatase non-receptor type 4 (Ptpn4) from Mus musculus (Mouse).